Here is a 127-residue protein sequence, read N- to C-terminus: MMSSDQQFFLKWNDFQTNMVTSFRHLRDEKSFTDVTLACEGQTCKAHKMVLSACSPYFKALLEENPSKHPIIILKDVSYIHLQAILEFMYAGEVNVSQEQLPAFLKTADRLKVKGLAETPSSIKREG.

Residues 33 to 98 (TDVTLACEGQ…MYAGEVNVSQ (66 aa)) enclose the BTB domain.

The BTB domain interacts with the BTB domain of Trl in vitro. Found in a Pc-containing complex.

It is found in the nucleus. Required, together with Trl, for maintaining the repressed state of target genes including homeotic genes Scr and Ubx. May also be involved in the activation of homeotic genes. Binds to a DNA Polycomb response element (PRE) at the bithorax complex. Also binds to polytene chromosomes at several hundred sites, many of which are shared with Trl and ph-p. Required during embryonic development. This Drosophila melanogaster (Fruit fly) protein is Longitudinals lacking protein-like.